The chain runs to 342 residues: Sesquiterpene synthase MBR_09977 (342 aa).

The Mg(2+) site is built by Asp91 and Asp96. The short motif at 91–96 (DDLFVD) is the DDXXXD motif element. Arg184 contributes to the substrate binding site. Mg(2+) contacts are provided by Asn230, Ser234, and Glu238.

It belongs to the terpene synthase family. Mg(2+) is required as a cofactor.

The catalysed reaction is (2E,6E)-farnesyl diphosphate + H2O = (+)-corvol ether B + diphosphate. The enzyme catalyses (2E,6E)-farnesyl diphosphate + H2O = (+)-corvol ether A + diphosphate. Functionally, terpene synthase that catalyzes the conversion of (2E,6E)-farnesyl diphosphate (FPP) into sesquiterpenes which are important for fungi-environment interactions. Produces a mixture consisting of 8 sesquiterpenes including corvol ethers A and B, as well as traces of epizonarene, gamma-cadinene, delta-cadinene, alpha-cadinene, alpha-cadinol, and an unidentified sesquiterpene. The major product is corvol ether A. The chain is Sesquiterpene synthase MBR_09977 from Metarhizium brunneum (strain ARSEF 3297).